A 355-amino-acid chain; its full sequence is MTGPHNDTESPHARPISVAELLARNGTIGAPAVSRRRRRRTDSDAVTVAELTCDIPIIHDDHADEQHLAATHAHRANIGVRVVEPAAQSPLEPVCEGIVAEPPVDDHGHVPPGCWSAPEPRWPKSPPLTHLRTGLQRSACSRPLPHLGDVRHPVAPDSIAQKQSDAEGMSPDPVEPFADIPVDVMGSEVRAAELVAEESAYARYNLQMSAGALFSGHTLTNELAERRGDEHAAGGLLAVGIDLDEDHLDLHTDLAGITSPARGWQSRFEALWRGSLIVLQSILAVVFGAGLFVAFDQLWRWNSIVALVLSVLVILGLVVGVRVVRRTEDIASTLIAVVVGALITLGPLALSLQSG.

The next 3 helical transmembrane spans lie at 275–295 (SLIVLQSILAVVFGAGLFVAF), 301–321 (WNSIVALVLSVLVILGLVVGV), and 330–350 (IASTLIAVVVGALITLGPLAL).

To M.tuberculosis Rv0497.

The protein localises to the cell membrane. This is an uncharacterized protein from Mycobacterium leprae (strain TN).